The following is a 269-amino-acid chain: Protein IAL1 (269 aa).

Residues 32-133 (SPCAACKFLR…QDLARAKYEL (102 aa)) enclose the LOB domain.

This sequence belongs to the LOB domain-containing protein family. As to expression, expressed in leaves, leaf primordia, immature ears, immature tassels, whole ovules, silk and husk leaves.

It localises to the nucleus. In Zea mays (Maize), this protein is Protein IAL1.